Here is a 23-residue protein sequence, read N- to C-terminus: Aldehyde dehydrogenase (23 aa).

This sequence belongs to the aldehyde dehydrogenase family.

The enzyme catalyses an aldehyde + NAD(+) + H2O = a carboxylate + NADH + 2 H(+). In Moraxella sp. (strain TAE123), this protein is Aldehyde dehydrogenase.